The following is a 152-amino-acid chain: Endoribonuclease YbeY (152 aa).

H111, H115, and H121 together coordinate Zn(2+).

It belongs to the endoribonuclease YbeY family. Zn(2+) serves as cofactor.

The protein localises to the cytoplasm. Single strand-specific metallo-endoribonuclease involved in late-stage 70S ribosome quality control and in maturation of the 3' terminus of the 16S rRNA. In Pseudomonas fluorescens (strain ATCC BAA-477 / NRRL B-23932 / Pf-5), this protein is Endoribonuclease YbeY.